A 185-amino-acid chain; its full sequence is Thymidine kinase (185 aa).

Residue G17–T24 participates in ATP binding. E92 (proton acceptor) is an active-site residue. Residue F121 participates in substrate binding. Zn(2+) is bound by residues C146 and C149. Residue L166–G170 participates in substrate binding. Positions 179 and 182 each coordinate Zn(2+).

It belongs to the thymidine kinase family.

The catalysed reaction is thymidine + ATP = dTMP + ADP + H(+). Functionally, phosphorylates thymidine. ASFV replicates in the cytoplasm of infected cells and contains genes encoding a number of enzymes needed for DNA synthesis, including thymidine kinase. Important for growth in swine macrophages in vitro and is a virus virulence factor in swine. In African swine fever virus (isolate Pig/Kenya/KEN-50/1950) (ASFV), this protein is Thymidine kinase.